The chain runs to 598 residues: MIIALDTYLVLNSVIAGYQFLKDSYQFYDSGALLLTAVSLLLSYHVCAFLFNQYKQVWTYTGLGELIVLLKGITLSAAVTGVIQYAVYHTMFFRLLTACWVLQLLSIGGTRILSRVLNESIRKKRCASSRALIIGAGSGGTLMVRQLLSKDEPDIIPVAFIDDDQTKHKLEIMGLPVIGGKESIMPAVQKLKINYIIIAIPSLRTHELQVLYKECVRTGVSIKIMPHFDEMLLGTRTAGQIRDVKAEDLLGRKPVTLDTSEISNRIKGKTVLVTGAGGSIGSEICRQISAFQPKEIILLGHGENSIHSIYTELNGRFGKHIVFHTEIADVQDRDKMFTLMKKYEPHVVYHAAAHKHVPLMEHNPEEAVKNNIIGTKNVAEAADMSGTETFVLISSDKAVNPANVMGATKRFAEMIIMNLGKVSRTKFVAVRFGNVLGSRGSVIPIFKKQIEKGGPVTVTHPAMTRYFMTIPEASRLVIQAGALAKGRQIFVLDMGEPVKIVDLAKNLIHLSGYTTEQVPIEFTGIRPGEKMYEELLNKNEVHAEQIFPKIHIGKAVDGDWPVLMRFIEDFHELPEADLRARLFAAINTSEEMTAASVH.

Helical transmembrane passes span 1–21 (MIIA…YQFL), 31–51 (GALL…AFLF), 63–83 (LGEL…TGVI), and 87–107 (VYHT…LLSI).

It belongs to the polysaccharide synthase family.

It localises to the cell membrane. In terms of biological role, involved in biofilm formation. This chain is Probable polysaccharide biosynthesis protein EpsC (epsC), found in Bacillus subtilis (strain 168).